The sequence spans 276 residues: UPF0276 protein Caul_0757 (276 aa).

Belongs to the UPF0276 family.

The protein is UPF0276 protein Caul_0757 of Caulobacter sp. (strain K31).